Reading from the N-terminus, the 177-residue chain is Large ribosomal subunit protein uL6 (177 aa).

The protein belongs to the universal ribosomal protein uL6 family. In terms of assembly, part of the 50S ribosomal subunit.

Its function is as follows. This protein binds to the 23S rRNA, and is important in its secondary structure. It is located near the subunit interface in the base of the L7/L12 stalk, and near the tRNA binding site of the peptidyltransferase center. This is Large ribosomal subunit protein uL6 from Pseudomonas paraeruginosa (strain DSM 24068 / PA7) (Pseudomonas aeruginosa (strain PA7)).